We begin with the raw amino-acid sequence, 171 residues long: HTH-type transcriptional regulator AldR (171 aa).

The segment covering 1-14 has biased composition (polar residues); sequence MSEGSSITGVQTPG. The tract at residues 1-21 is disordered; sequence MSEGSSITGVQTPGSPKDVRA. The HTH asnC-type domain maps to 24-85; that stretch reads LDDIDRRILL…DIDPAAVGLG (62 aa). The segment at residues 43-62 is a DNA-binding region (H-T-H motif); that stretch reads NSALAEMVGIAPSTCHGRVR.

As to quaternary structure, homodimer in the absence of L-alanine. Homooctamer in the presence of L-alanine. Homotetramers in the presence of L-cysteine.

Its activity is regulated as follows. In the presence of alanine, AldR changes its quaternary structure from a homodimer to an octamer with an open-ring conformation. The binding affinity of AldR for the ald control region is increased significantly by L-alanine. In vitro, L-cysteine also increases the binding affinity of AldR for the target DNA. Transcriptional regulator that might play a role under hypoxic conditions. Regulates the expression of ald, which encodes L-alanine dehydrogenase. Serves as both an activator for ald expression in the presence of L-alanine and a repressor in the absence of L-alanine. Acts by binding directly to the upstream region of the ald gene. Four AldR-binding sites (O2, O1, O4 and O3) were identified upstream of the ald gene. O2, O1 and O4 are required for the induction of ald expression by alanine, while O3 is directly involved in the repression of ald expression, by occluding the access of RNA polymerase to the ald promoter. In addition to O3, both O1 and O4 are also necessary for full repression of ald expression in the absence of alanine. This is HTH-type transcriptional regulator AldR from Mycolicibacterium smegmatis (strain ATCC 700084 / mc(2)155) (Mycobacterium smegmatis).